The following is a 1348-amino-acid chain: Phosphoribosylformylglycinamidine synthase (1348 aa).

ATP is bound by residues 300-311 (GAATGAGGEIRD) and Ala-701. Positions 702, 741, 745, and 941 each coordinate Mg(2+). Ser-943 is a binding site for ATP. The Glutamine amidotransferase type-1 domain occupies 1099–1348 (VAILREQGVN…MFRNARVWCG (250 aa)). Residue Cys-1192 is the Nucleophile of the active site. Residues His-1313 and Glu-1315 contribute to the active site.

In the N-terminal section; belongs to the FGAMS family. As to quaternary structure, monomer.

Its subcellular location is the cytoplasm. It carries out the reaction N(2)-formyl-N(1)-(5-phospho-beta-D-ribosyl)glycinamide + L-glutamine + ATP + H2O = 2-formamido-N(1)-(5-O-phospho-beta-D-ribosyl)acetamidine + L-glutamate + ADP + phosphate + H(+). Its pathway is purine metabolism; IMP biosynthesis via de novo pathway; 5-amino-1-(5-phospho-D-ribosyl)imidazole from N(2)-formyl-N(1)-(5-phospho-D-ribosyl)glycinamide: step 1/2. Functionally, phosphoribosylformylglycinamidine synthase involved in the purines biosynthetic pathway. Catalyzes the ATP-dependent conversion of formylglycinamide ribonucleotide (FGAR) and glutamine to yield formylglycinamidine ribonucleotide (FGAM) and glutamate. In Xanthomonas axonopodis pv. citri (strain 306), this protein is Phosphoribosylformylglycinamidine synthase.